The sequence spans 881 residues: Sodium/potassium/calcium exchanger Nckx30C (881 aa).

Residues 1-194 are Extracellular-facing; it reads MLQPTTCSKQ…SRCRSRRCLR (194 aa). An N-linked (GlcNAc...) asparagine glycan is attached at asparagine 69. 4 disordered regions span residues 79–111, 149–181, 215–255, and 272–315; these read DMLS…APSD, AKTR…LLHP, AAKP…TSGE, and GLEE…TTKT. Residues 85 to 95 are compositionally biased toward polar residues; sequence RSRSSSTTIDF. Positions 149-175 are enriched in low complexity; the sequence is AKTRSRTAAQLPATSAASATSSRGASA. A helical membrane pass occupies residues 195–215; that stretch reads LPIYSILLLCLTTQGLGLGDA. The Cytoplasmic portion of the chain corresponds to 216–330; it reads AKPRPAKQHF…DLFTKEQLEN (115 aa). Over residues 228 to 240 the composition is skewed to low complexity; it reads SNSNSPNQNQNHN. The span at 296–315 shows a compositional bias: polar residues; that stretch reads AGNQRGINDTHNDNSTTTKT. Residues 331–351 traverse the membrane as a helical segment; the sequence is GAVILHIIGVIYMFVALAIVC. The Extracellular segment spans residues 352 to 375; it reads DEFFVPSLDVIIEKLGITDDVAGA. Residues 372–412 form an Alpha-1 repeat; the sequence is VAGATFMAAGGSAPELFTSVIGVFVSFDDVGIGTIVGSAVF. A helical transmembrane segment spans residues 376 to 396; it reads TFMAAGGSAPELFTSVIGVFV. The Cytoplasmic segment spans residues 397–402; the sequence is SFDDVG. Residues 403–423 form a helical membrane-spanning segment; it reads IGTIVGSAVFNILFVIGMCAL. Over 424–433 the chain is Extracellular; it reads FSKTVLSLTW. The helical transmembrane segment at 434-454 threads the bilayer; sequence WPLFRDCSFYSISLLVLIYFF. At 455-458 the chain is on the cytoplasmic side; sequence RDNR. Residues 459–479 traverse the membrane as a helical segment; sequence IFWWEALILFTIYIGYVAFMK. Over 480–720 the chain is Extracellular; sequence WNVQVETCVK…PDTRTPRGKR (241 aa). The disordered stretch occupies residues 508-565; sequence PAGNAANSSETSMATQPGGSVTSRAASETRSGPPGSSNAGATGNSSGGGGTSGSTQTG. The span at 512-537 shows a compositional bias: polar residues; it reads AANSSETSMATQPGGSVTSRAASETR. Residues asparagine 514 and asparagine 551 are each glycosylated (N-linked (GlcNAc...) asparagine). Over residues 542–551 the composition is skewed to low complexity; sequence GSSNAGATGN. A helical transmembrane segment spans residues 721 to 741; the sequence is FFPVTFIGSIVWIAAFSYLMV. Residues 742-756 lie on the Cytoplasmic side of the membrane; it reads WWANVAGDTARIPPE. A helical membrane pass occupies residues 757–777; that stretch reads VMGLTFLAAGTSIPDLITSVI. The Alpha-2 repeat unit spans residues 764 to 795; it reads AAGTSIPDLITSVIVARKGFGDMAVSSSVGSN. Residues 778–795 are Extracellular-facing; that stretch reads VARKGFGDMAVSSSVGSN. Residues 796-816 traverse the membrane as a helical segment; that stretch reads IFDVTVGLPIPWLLYGIIYGA. The Cytoplasmic segment spans residues 817–822; the sequence is PVEVNS. The chain crosses the membrane as a helical span at residues 823 to 843; the sequence is VGMVCSITILFMMLVFVVMSI. At 844–852 the chain is on the extracellular side; sequence ACFRWRMNK. Residues 853-873 traverse the membrane as a helical segment; it reads GLGFTMFLLYFAFVAVSLMFE. The Cytoplasmic portion of the chain corresponds to 874–881; it reads YDVITCPF.

This sequence belongs to the Ca(2+):cation antiporter (CaCA) (TC 2.A.19) family. SLC24A subfamily. In terms of tissue distribution, expressed in the adult nervous system. Expressed in the photoreceptor cells as well as in the lamina, medulla, and optic lobes of the brain.

It localises to the membrane. Functionally, may function in the removal and maintenance of calcium homeostasis during signaling in the adult and in signaling events during embryogenesis and patterning of imaginal disks. Transports one Ca(2+) and 1 K(+) in exchange for 4 Na(+). The protein is Sodium/potassium/calcium exchanger Nckx30C (Nckx30C) of Drosophila melanogaster (Fruit fly).